The chain runs to 173 residues: ATP-dependent protease subunit HslV (173 aa).

Thr2 is a catalytic residue. Residues Gly158, Asp161, and Ser164 each contribute to the Na(+) site.

The protein belongs to the peptidase T1B family. HslV subfamily. As to quaternary structure, a double ring-shaped homohexamer of HslV is capped on each side by a ring-shaped HslU homohexamer. The assembly of the HslU/HslV complex is dependent on binding of ATP.

It localises to the cytoplasm. The catalysed reaction is ATP-dependent cleavage of peptide bonds with broad specificity.. With respect to regulation, allosterically activated by HslU binding. Its function is as follows. Protease subunit of a proteasome-like degradation complex believed to be a general protein degrading machinery. This Haemophilus ducreyi (strain 35000HP / ATCC 700724) protein is ATP-dependent protease subunit HslV.